The primary structure comprises 1313 residues: Inter-alpha-trypsin inhibitor heavy chain H6 (1313 aa).

The signal sequence occupies residues 1–23 (MSGWRYLICVSFLLTILLELTYQ). In terms of domain architecture, VIT spans 24–150 (GPPVPASSST…EVTFSLAYEE (127 aa)). N-linked (GlcNAc...) asparagine glycans are attached at residues asparagine 83, asparagine 374, asparagine 540, and asparagine 594. In terms of domain architecture, VWFA spans 283–469 (NVVFVIDVSS…LQLKGLYEEI (187 aa)). Disordered regions lie at residues 612–644 (QPKQ…HGLG), 783–817 (HSKP…TLQV), 856–928 (LKPS…EPLP), and 959–983 (PSRP…SPPN). Residues 623 to 640 (QTSTSAGPDTIMPSSSSR) are compositionally biased toward polar residues. Residues 864 to 875 (QISTSISLSKPE) are compositionally biased toward polar residues. A compositionally biased stretch (pro residues) spans 876 to 888 (TPNPHMPQTPLPP). The segment covering 907 to 921 (TISSSTGPSSTTTTS) has biased composition (low complexity). N-linked (GlcNAc...) asparagine glycosylation is found at asparagine 971 and asparagine 1231.

It belongs to the ITIH family.

Its subcellular location is the secreted. The chain is Inter-alpha-trypsin inhibitor heavy chain H6 (ITIH6) from Homo sapiens (Human).